Here is a 450-residue protein sequence, read N- to C-terminus: Tubulin alpha-3 chain (450 aa).

Glutamine 11 is a GTP binding site. N6-acetyllysine is present on lysine 40. Residues glutamate 71, glycine 144, threonine 145, threonine 179, asparagine 206, and asparagine 228 each contribute to the GTP site. Residue glutamate 71 coordinates Mg(2+). Glutamate 254 is a catalytic residue.

It belongs to the tubulin family. In terms of assembly, dimer of alpha and beta chains. A typical microtubule is a hollow water-filled tube with an outer diameter of 25 nm and an inner diameter of 15 nM. Alpha-beta heterodimers associate head-to-tail to form protofilaments running lengthwise along the microtubule wall with the beta-tubulin subunit facing the microtubule plus end conferring a structural polarity. Microtubules usually have 13 protofilaments but different protofilament numbers can be found in some organisms and specialized cells. Mg(2+) is required as a cofactor. In terms of processing, undergoes a tyrosination/detyrosination cycle, the cyclic removal and re-addition of a C-terminal tyrosine residue by the enzymes tubulin tyrosine carboxypeptidase (TTCP) and tubulin tyrosine ligase (TTL), respectively. Acetylation of alpha chains at Lys-40 stabilizes microtubules and affects affinity and processivity of microtubule motors. This modification has a role in multiple cellular functions, ranging from cell motility, cell cycle progression or cell differentiation to intracellular trafficking and signaling.

The protein resides in the cytoplasm. It is found in the cytoskeleton. It catalyses the reaction GTP + H2O = GDP + phosphate + H(+). Tubulin is the major constituent of microtubules, a cylinder consisting of laterally associated linear protofilaments composed of alpha- and beta-tubulin heterodimers. Microtubules grow by the addition of GTP-tubulin dimers to the microtubule end, where a stabilizing cap forms. Below the cap, tubulin dimers are in GDP-bound state, owing to GTPase activity of alpha-tubulin. In Zea mays (Maize), this protein is Tubulin alpha-3 chain (TUBA3).